The following is a 4660-amino-acid chain: MERGAAAAAWMLLLAIAACLAPVSGQECGSGNFRCDNGYCIPASWRCDGTRDCLDDTDEIGCPPRSCGSGFFLCPAEGTCIPSSWVCDQDKDCSDGADEQQNCPGTTCSSQQLTCSNGQCVPIEYRCDHVSDCPDGSDERNCYYPTCDQLTCANGACYNTSQKCDHKVDCRDSSDEANCTTLCSQKEFQCGSGECILRAYVCDHDNDCEDNSDEHNCNYDTCGGHQFTCSNGQCINQNWVCDGDDDCQDSGDEDGCESNQRHHTCYPREWACPGSGRCISMDKVCDGVPDCPEGEDENNATSGRYCGTGLCSILNCEYQCHQTPYGGECFCPPGHIINSNDSRTCIDFDDCQIWGICDQKCESRQGRHQCLCEEGYILERGQHCKSNDSFSAASIIFSNGRDLLVGDLHGRNFRILAESKNRGIVMGVDFHYQKHRVFWTDPMQAKVFSTDINGLNTQEILNVSIDAPENLAVDWINNKLYLVETRVNRIDVVNLEGNQRVTLITENLGHPRGIALDPTVGYLFFSDWGSLSGQPKVERAFMDGSNRKDLVTTKLGWPAGITLDLVSKRVYWVDSRYDYIETVTYDGIQRKTVARGGSLVPHPFGISLFEEHVFFTDWTKMAVMKANKFTDTNPQVYHQSSLTPFGVTVYHALRQPNATNPCGNNNGGCAQICVLSHRTDNGGLGYRCKCEFGFELDADEHHCVAVKNFLLFSSQTAVRGIPFTLSTQEDVMVPVTGSPSFFVGIDFDAQHSTIFYSDLSKNIIYQQKIDGTGKEVITANRLQNVECLSFDWISRNLYWTDGGSKSVTVMKLADKSRRQIISNLNNPRSIVVHPAAGYMFLSDWFRPAKIMRAWSDGSHLMPIVNTSLGWPNGLAIDWSTSRLYWVDAFFDKIEHSNLDGLDRKRLGHVDQMTHPFGLTVFKDNVFLTDWRLGAIIRVRKSDGGDMTVVRRGISSIMHVKAYDADLQTGTNYCSQTTHPNGDCSHFCFPVPNFQRVCGCPYGMKLQRDQMTCEGDPAREPPTQQCGSSSFPCNNGKCVPSIFRCDGVDDCHDNSDEHQCGALNNTCSSSAFTCVHGGQCIPGQWRCDKQNDCLDGSDEQNCPTRSPSSTCPPTSFTCDNHMCIPKEWVCDTDNDCSDGSDEKNCQASGTCHPTQFRCPDHRCISPLYVCDGDKDCVDGSDEAGCVLNCTSSQFKCADGSSCINSRYRCDGVYDCKDNSDEAGCPTRPPGMCHPDEFQCQGDGTCIPNTWECDGHPDCIQGSDEHNGCVPKTCSPSHFLCDNGNCIYNSWVCDGDNDCRDMSDEKDCPTQPFHCPSSQWQCPGYSICVNLSALCDGVFDCPNGTDESPLCNQDSCLHFNGGCTHRCIQGPFGATCVCPIGYQLANDTKTCEDVNECDIPGFCSQHCVNMRGSFRCACDPEYTLESDGRTCKVTASENLLLVVASRDKIIMDNITAHTHNIYSLVQDVSFVVALDFDSVTGRVFWSDLLEGKTWSAFQNGTDKRVVHDSGLSLTEMIAVDWIGRNIYWTDYTLETIEVSKIDGSHRTVLISKNVTKPRGLALDPRMGDNVMFWSDWGHHPRIERASMDGTMRTVIVQEKIYWPCGLSIDYPNRLIYFMDAYLDYIEFCDYDGQNRRQVIASDLVLHHPHALTLFEDSVFWTDRGTHQVMQANKWHGRNQSVVMYSVPQPLGIIAIHPSRQPSSPNPCASATCSHLCLLSAQEPRHYSCACPSGWNLSDDSVNCVRGDQPFLISVRENVIFGISLDPEVKSNDAMVPISGIQHGYDVEFDDSEQFIYWVENPGEIHRVKTDGSNRTAFAPLSLLGSSLGLALDWVSRNIYYTTPASRSIEVLTLRGDTRYGKTLITNDGTPLGVGFPVGIAVDPARGKLYWSDHGTDSGVPAKIASANMDGTSLKILFTGNMEHLEVVTLDIQEQKLYWAVTSRGVIERGNVDGTERMILVHHLAHPWGLVVHGSFLYYSDEQYEVIERVDKSSGSNKVVFRDNIPYLRGLRVYHHRNAADSSNGCSNNPNACQQICLPVPGGMFSCACASGFKLSPDGRSCSPYNSFIVVSMLPAVRGFSLELSDHSEAMVPVAGQGRNVLHADVDVANGFIYWCDFSSSVRSSNGIRRIKPNGSNFTNIVTYGIGANGIRGVAVDWVAGNLYFTNAFVYETLIEVIRINTTYRRVLLKVSVDMPRHIVVDPKHRYLFWADYGQKPKIERSFLDCTNRTVLVSEGIVTPRGLAVDHDTGYIYWVDDSLDIIARIHRDGGESQVVRYGSRYPTPYGITVFGESIIWVDRNLRKVFQASKQPGNTDPPTVIRDSINLLRDVTIFDEHVQPLSPAELNNNPCLQSNGGCSHFCFALPELPTPKCGCAFGTLEDDGKNCATSREDFLIYSLNNSLRSLHFDPQDHNLPFQAISVEGMAIALDYDRRNNRIFFTQKLNPIRGQISYVNLYSGASSPTILLSNIGVTDGIAFDWINRRIYYSDFSNQTINSMAEDGSNRAVIARVSKPRAIVLDPCRGYMYWTDWGTNAKIERATLGGNFRVPIVNTSLVWPNGLTLDLETDLLYWADASLQKIERSTLTGSNREVVISTAFHSFGLTVYGQYIYWTDFYTKKIYRANKYDGSDLIAMTTRLPTQPSGISTVVKTQQQQCSNPCDQFNGGCSHICAPGPNGAECQCPHEGSWYLANDNKYCVVDTGARCNQFQFTCLNGRCISQDWKCDNDNDCGDGSDELPTVCAFHTCRSTAFTCANGRCVPYHYRCDFYNDCGDNSDEAGCLFRSCNSTTEFTCSNGRCIPLSYVCNGINNCHDNDTSDEKNCPPITCQPDFAKCQTTNICVPRAFLCDGDNDCGDGSDENPIYCASHTCRSNEFQCVSPHRCIPSYWFCDGEADCVDSSDEPDTCGHSLNSCSANQFHCDNGRCISSSWVCDGDNDCGDMSDEDQRHHCELQNCSSTEFTCINSRPPNRRCIPQHWVCDGDADCADALDELQNCTMRACSTGEFSCANGRCIRQSFRCDRRNDCGDYSDERGCSYPPCRDDQFTCQNGQCITKLYVCDEDNDCGDGSDEQEHLCHTPEPTCPPHQFRCDNGHCIEMGTVCNHVDDCSDNSDEKGCGINECQDSSISHCDHNCTDTITSFYCSCLPGYKLMSDKRTCVDIDECKETPQLCSQKCENVIGSYICKCAPGYIREPDGKSCRQNSNIEPYLVFSNRYYIRNLTIDGTSYSLILQGLGNVVALDFDRVEERLYWIDAEKQIIERMFLNKTNQETIISHRLRRAESLAVDWVSRKLYWLDAILDCLFVSDLEGRQRKMLAQHCVDANNTFCFENPRGIVLHPQRGYVYWADWGDHAYIARIGMDGTNKTVIISTKIEWPNAITIDYTNDLLYWADAHLGYIEFSDLEGHHRHTVYDGTLPHPFALTIFEDTVFWTDWNTRTVEKGNKYDGSGRVVLVNTTHKPFDIHVLHPYRQPIMSNPCATNNGGCSHLCLIKAGGRGFTCECPDDFQTVQLRDRTLCMPMCSSTQFLCGNNEKCIPIWWKCDGQKDCSDGSDESDLCPHRFCRLGQFQCRDGNCTSPQALCNARQDCADGSDEDRVLCEHHRCEANEWQCANKRCIPEYWQCDSVDDCLDNSDEDPSHCASRTCRPGQFKCNNGRCIPQSWKCDVDNDCGDYSDEPIHECMTAAYNCDNHTEFSCKTNYRCIPQWAVCNGFDDCRDNSDEQGCESVPCHPSGDFRCGNHHCIPLRWKCDGIDDCGDNSDEESCVPRECTESEFRCADQQCIPSRWVCDQENDCGDNSDERDCEMKTCHPEHFQCTSGHCVPKALACDGRADCLDASDESACPTRFPNGTYCPAAMFECKNHVCIQSFWICDGENDCVDGSDEEIHLCFNVPCESPQRFRCDNSRCIYGHQLCNGVDDCGDGSDEKEEHCRKPTHKPCTDTEYKCSNGNCVSQHYVCDNVDDCGDLSDETGCNLGENRTCAEKICEQNCTQLSNGGFICSCRPGFKPSTLDKNSCQDINECEEFGICPQSCRNSKGSYECFCVDGFKSMSTHYGERCAADGSPPLLLLPENVRIRKYNISSEKFSEYLEEEEHIQAIDYDWDPEGIGLSVVYYTVLSQGSQFGAIKRAYLPDFESGSNNPVREVDLGLKYLMQPDGLAVDWVGRHIYWSDAKSQRIEVATLDGRYRKWLITTQLDQPAAIAVNPKLGLMFWTDQGKQPKIESAWMNGEHRSVLASANLGWPNGLSIDYLNGDRIYWSDSKEDVIESIKYDGTDRRLIINDAMKPFSLDIFEDQLYWVAKEKGEVWRQNKFGKGNKEKLLVVNPWLTQVRIFHQLRYNQSVSNPCKQVCSHLCLLRPGGYSCACPQGSDFVTGSTVECDAASELPITMPSPCRCMHGGSCYFDENDLPKCKCSSGYSGEYCEIGLSRGIPPGTTMALLLTFAMVIIVGALVLVGFFHYRKTGSLLPSLPKLPSLSSLAKPSENGNGVTFRSGADVNMDIGVSPFGPETIIDRSMAMNEQFVMEVGKQPVIFENPMYAAKDSTSKVGLAVQGPSVSSQVTVPENVENQNYGRSIDPSEIVPEPKPASPGADETQGTKWNIFKRKPKQTTNFENPIYAEMDTEQKEAVAVAPPPSPSLPAKASKRSSTPGYTATEDTFKDTANLVKEDSDV.

A signal peptide spans 1–25 (MERGAAAAAWMLLLAIAACLAPVSG). Residues 26–4425 (QECGSGNFRC…LSRGIPPGTT (4400 aa)) are Extracellular-facing. 7 consecutive LDL-receptor class A domains span residues 27–63 (ECGSGNFRCDNGYCIPASWRCDGTRDCLDDTDEIGCP), 66–104 (SCGSGFFLCPAEGTCIPSSWVCDQDKDCSDGADEQQNCP), 107–143 (TCSSQQLTCSNGQCVPIEYRCDHVSDCPDGSDERNCY), 146–180 (TCDQLTCANGACYNTSQKCDHKVDCRDSSDEANCT), 182–218 (LCSQKEFQCGSGECILRAYVCDHDNDCEDNSDEHNCN), 221–257 (TCGGHQFTCSNGQCINQNWVCDGDDDCQDSGDEDGCE), and 264–307 (TCYP…RYCG). 21 disulfide bridges follow: C28-C40, C35-C53, C47-C62, C67-C80, C74-C93, C87-C103, C108-C120, C115-C133, C127-C142, C147-C157, C152-C170, C164-C179, C183-C195, C190-C208, C202-C217, C222-C234, C229-C247, C241-C256, C265-C278, C272-C291, and C285-C306. N159 and N178 each carry an N-linked (GlcNAc...) asparagine glycan. N-linked (GlcNAc...) asparagine glycans are attached at residues N299, N340, N387, and N462. 4 LDL-receptor class B repeats span residues 435–477 (HRVF…DWIN), 478–520 (NKLY…DPTV), 521–567 (GYLF…DLVS), and 568–612 (KRVY…FEEH). N-linked (GlcNAc...) asparagine glycosylation occurs at N657. LDL-receptor class B repeat units lie at residues 752 to 794 (STIF…DWIS), 795 to 836 (RNLY…HPAA), 837 to 880 (GYMF…DWST), and 881 to 924 (SRLY…FKDN). N865 carries N-linked (GlcNAc...) asparagine glycosylation. The LDL-receptor class A 8 domain occupies 1024–1060 (QCGSSSFPCNNGKCVPSIFRCDGVDDCHDNSDEHQCG). 3 disulfide bridges follow: C1025–C1037, C1032–C1050, and C1044–C1059. Residue N1063 is glycosylated (N-linked (GlcNAc...) asparagine). 7 consecutive LDL-receptor class A domains span residues 1065–1102 (TCSSSAFTCVHGGQCIPGQWRCDKQNDCLDGSDEQNCP), 1109–1145 (TCPPTSFTCDNHMCIPKEWVCDTDNDCSDGSDEKNCQ), 1149–1185 (TCHPTQFRCPDHRCISPLYVCDGDKDCVDGSDEAGCV), 1187–1224 (NCTSSQFKCADGSSCINSRYRCDGVYDCKDNSDEAGCP), 1230–1268 (MCHPDEFQCQGDGTCIPNTWECDGHPDCIQGSDEHNGCV), 1271–1307 (TCSPSHFLCDNGNCIYNSWVCDGDNDCRDMSDEKDCP), and 1312–1350 (HCPSSQWQCPGYSICVNLSALCDGVFDCPNGTDESPLCN). Intrachain disulfides connect C1066–C1079, C1073–C1092, C1086–C1101, C1110–C1122, C1117–C1135, C1129–C1144, C1150–C1162, C1157–C1175, and C1169–C1184. W1127, D1130, D1132, D1134, D1140, and E1141 together coordinate Ca(2+). The N-linked (GlcNAc...) asparagine glycan is linked to N1187. 18 disulfides stabilise this stretch: C1188/C1201, C1195/C1214, C1208/C1223, C1231/C1244, C1238/C1257, C1251/C1267, C1272/C1284, C1279/C1297, C1291/C1306, C1313/C1326, C1320/C1339, C1333/C1349, C1354/C1365, C1361/C1374, C1376/C1389, C1395/C1405, C1401/C1414, and C1416/C1429. Ca(2+) is bound by residues Y1206, D1209, V1211, D1213, D1219, and E1220. N-linked (GlcNAc...) asparagine glycosylation is found at N1328 and N1341. Residues 1350–1390 (NQDSCLHFNGGCTHRCIQGPFGATCVCPIGYQLANDTKTCE) form the EGF-like 1 domain. N-linked (GlcNAc...) asparagine glycosylation is present at N1384. Residues 1391–1430 (DVNECDIPGFCSQHCVNMRGSFRCACDPEYTLESDGRTCK) enclose the EGF-like 2; calcium-binding domain. Residues N1451, N1497, and N1551 are each glycosylated (N-linked (GlcNAc...) asparagine). LDL-receptor class B repeat units lie at residues 1479 to 1521 (GRVF…DWIG), 1522 to 1564 (RNIY…DPRM), 1567 to 1610 (NVMF…DYPN), 1611 to 1655 (RLIY…FEDS), and 1656 to 1696 (VFWT…IHPS). N-linked (GlcNAc...) asparagine glycosylation is found at N1676, N1733, and N1811. LDL-receptor class B repeat units lie at residues 1791 to 1833 (QFIY…DWVS), 1834 to 1883 (RNIY…DPAR), 1884 to 1931 (GKLY…DIQE), 1932 to 1973 (QKLY…HGSF), 1974 to 2014 (LYYS…YHHR), 2108 to 2157 (GFIY…DWVA), 2158 to 2202 (GNLY…DPKH), 2203 to 2246 (RYLF…DHDT), 2247 to 2290 (GYIY…FGES), and 2291 to 2333 (IIWV…FDEH). 4 N-linked (GlcNAc...) asparagine glycosylation sites follow: N2131, N2134, N2178, and N2225. A glycan (N-linked (GlcNAc...) asparagine) is linked at N2396. 5 LDL-receptor class B repeats span residues 2432–2478 (NRIF…DWIN), 2479–2519 (RRIY…DPCR), 2520–2563 (GYMY…DLET), 2564–2605 (DLLY…YGQY), and 2606–2647 (IYWT…VVKT). N2488 and N2548 each carry an N-linked (GlcNAc...) asparagine glycan. LDL-receptor class A domains lie at 2700–2738 (RCNQFQFTCLNGRCISQDWKCDNDNDCGDGSDELPTVCA), 2741–2777 (TCRSTAFTCANGRCVPYHYRCDFYNDCGDNSDEAGCL), 2780–2819 (SCNSTTEFTCSNGRCIPLSYVCNGINNCHDNDTSDEKNCP), 2822–2861 (TCQPDFAKCQTTNICVPRAFLCDGDNDCGDGSDENPIYCA), 2864–2902 (TCRSNEFQCVSPHRCIPSYWFCDGEADCVDSSDEPDTCG), 2907–2946 (SCSANQFHCDNGRCISSSWVCDGDNDCGDMSDEDQRHHCE), 2949–2991 (NCSS…QNCT), 2994–3030 (ACSTGEFSCANGRCIRQSFRCDRRNDCGDYSDERGCS), 3033–3071 (PCRDDQFTCQNGQCITKLYVCDEDNDCGDGSDEQEHLCH), and 3076–3112 (TCPPHQFRCDNGHCIEMGTVCNHVDDCSDNSDEKGCG). Cystine bridges form between C2701-C2713, C2708-C2726, C2720-C2737, C2742-C2754, C2749-C2767, C2761-C2776, C2781-C2794, C2789-C2807, C2801-C2818, C2823-C2836, C2830-C2849, C2843-C2860, C2865-C2878, C2872-C2891, C2885-C2901, C2908-C2920, C2915-C2933, and C2927-C2945. N2782 carries an N-linked (GlcNAc...) asparagine glycan. N2810 carries an N-linked (GlcNAc...) asparagine glycan. An N-linked (GlcNAc...) asparagine glycan is attached at N2949. Intrachain disulfides connect C2950–C2967, C2957–C2980, C2974–C2990, C2995–C3007, C3002–C3020, C3014–C3029, C3034–C3046, C3041–C3059, C3053–C3070, C3077–C3089, C3084–C3102, C3096–C3111, C3116–C3128, C3124–C3137, C3139–C3152, C3158–C3169, C3165–C3178, and C3180–C3193. A glycan (N-linked (GlcNAc...) asparagine) is linked at N2989. Residues 3112–3153 (GINECQDSSISHCDHNCTDTITSFYCSCLPGYKLMSDKRTCV) enclose the EGF-like 3 domain. A glycan (N-linked (GlcNAc...) asparagine) is linked at N3127. The EGF-like 4; calcium-binding domain maps to 3154-3194 (DIDECKETPQLCSQKCENVIGSYICKCAPGYIREPDGKSCR). N3213, N3259, N3317, and N3357 each carry an N-linked (GlcNAc...) asparagine glycan. 5 LDL-receptor class B repeats span residues 3241 to 3283 (ERLY…DWVS), 3284 to 3326 (RKLY…ENPR), 3335 to 3378 (GYVY…DYTN), 3379 to 3421 (DLLY…FEDT), and 3422 to 3462 (VFWT…LHPY). N-linked (GlcNAc...) asparagine glycosylation is present at N3448. 8 LDL-receptor class A domains span residues 3513–3551 (MCSSTQFLCGNNEKCIPIWWKCDGQKDCSDGSDESDLCP), 3554–3592 (FCRLGQFQCRDGNCTSPQALCNARQDCADGSDEDRVLCE), 3595–3633 (RCEANEWQCANKRCIPEYWQCDSVDDCLDNSDEDPSHCA), 3636–3674 (TCRPGQFKCNNGRCIPQSWKCDVDNDCGDYSDEPIHECM), 3679–3717 (NCDNHTEFSCKTNYRCIPQWAVCNGFDDCRDNSDEQGCE), 3720–3757 (PCHPSGDFRCGNHHCIPLRWKCDGIDDCGDNSDEESCV), 3760–3796 (ECTESEFRCADQQCIPSRWVCDQENDCGDNSDERDCE), and 3799–3835 (TCHPEHFQCTSGHCVPKALACDGRADCLDASDESACP). 24 cysteine pairs are disulfide-bonded: C3514/C3527, C3521/C3540, C3534/C3550, C3555/C3567, C3562/C3580, C3574/C3591, C3596/C3608, C3603/C3621, C3615/C3632, C3637/C3649, C3644/C3662, C3656/C3673, C3680/C3694, C3688/C3707, C3701/C3716, C3721/C3734, C3729/C3747, C3741/C3756, C3761/C3773, C3768/C3786, C3780/C3795, C3800/C3812, C3807/C3825, and C3819/C3834. N3566 carries an N-linked (GlcNAc...) asparagine glycan. An N-linked (GlcNAc...) asparagine glycan is attached at N3682. N-linked (GlcNAc...) asparagine glycosylation is present at N3840. LDL-receptor class A domains are found at residues 3843–3881 (YCPAAMFECKNHVCIQSFWICDGENDCVDGSDEEIHLCF), 3884–3923 (PCESPQRFRCDNSRCIYGHQLCNGVDDCGDGSDEKEEHCR), and 3929–3965 (PCTDTEYKCSNGNCVSQHYVCDNVDDCGDLSDETGCN). Intrachain disulfides connect C3844-C3856, C3851-C3869, C3863-C3880, C3885-C3898, C3893-C3911, C3905-C3922, C3930-C3942, C3937-C3955, and C3949-C3964. 2 N-linked (GlcNAc...) asparagine glycosylation sites follow: N3969 and N3980. The EGF-like 5; calcium-binding domain maps to 4009-4050 (DINECEEFGICPQSCRNSKGSYECFCVDGFKSMSTHYGERCA). Cystine bridges form between C4013–C4023, C4019–C4032, and C4034–C4049. An N-linked (GlcNAc...) asparagine glycan is attached at N4070. LDL-receptor class B repeat units follow at residues 4156–4198 (RHIY…NPKL), 4199–4242 (GLMF…DYLN), and 4244–4285 (DRIY…FEDQ). N4329 is a glycosylation site (N-linked (GlcNAc...) asparagine). The EGF-like 6 domain maps to 4379–4413 (MPSPCRCMHGGSCYFDENDLPKCKCSSGYSGEYCE). 3 cysteine pairs are disulfide-bonded: C4383–C4391, C4385–C4401, and C4403–C4412. The chain crosses the membrane as a helical span at residues 4426–4446 (MALLLTFAMVIIVGALVLVGF). The Cytoplasmic portion of the chain corresponds to 4447–4660 (FHYRKTGSLL…ANLVKEDSDV (214 aa)). An SH3-binding motif is present at residues 4454–4463 (SLLPSLPKLP). Positions 4457 to 4462 (PSLPKL) match the PxLPxI/L motif 1; mediates interaction with ANKRA2 motif. A PxLPxI/L motif 2; mediates interaction with ANKRA2 motif is present at residues 4460-4465 (PKLPSL). S4464 and S4467 each carry phosphoserine. The Endocytosis signal motif lies at 4522 to 4527 (FENPMY). Positions 4558–4660 (QNYGRSIDPS…ANLVKEDSDV (103 aa)) are disordered. Residue S4577 is modified to Phosphoserine. The interaction with DAB2 stretch occupies residues 4597–4610 (QTTNFENPIYAEMD). Positions 4603–4606 (NPIY) match the NPXY motif motif. The SH2-binding signature appears at 4606-4609 (YAEM). Residues 4619 to 4630 (VAPPPSPSLPAK) carry the SH3-binding motif. S4624 is modified (phosphoserine). Residues 4627–4636 (LPAKASKRSS) are compositionally biased toward low complexity. T4637 is subject to Phosphothreonine. S4658 carries the post-translational modification Phosphoserine.

This sequence belongs to the LDLR family. As to quaternary structure, binds plasminogen, extracellular matrix components, plasminogen activator-plasminogen activator inhibitor type I complex, apolipoprotein E-enriched beta-VLDL, lipoprotein lipase, lactoferrin, CLU/clusterin and calcium. Forms a multimeric complex together with LRPAP1. Interacts (via PxLPxI/L motif) with ANKRA2 (via ankyrin repeats). Interacts with LRP2BP. Interacts (via NPXY motif) with DAB2; the interaction is not affected by tyrosine phosphorylation of the NPXY motif. Interacts with MB. Interacts with BMP4. Interacts with the Sonic hedgehog protein N-product which is the active product of SHH. Interacts with CST3 in a calcium-dependent manner. Interacts with the vitamin-D binding protein GC/DBP. Interacts with sex hormone-binding protein SHBG. Interacts with angiotensin-2. Also interacts with angiotensin 1-7. Interacts with APOM. Interacts with selenoprotein SEPP1. Interacts with LEP. Interacts with ALB. Interacts with the antiapoptotic protein BIRC5/survivin. Interacts with matrix metalloproteinase MMP2 in complex with metalloproteinase inhibitor TIMP1. In neurons, forms a trimeric complex with APP and APPB1/FE65. Interacts with LDLRAP1/ARH; mediates trafficking of LRP2 to the endocytic recycling compartment. Does not interact with beta-amyloid protein 40 alone but interacts with the complex composed of beta-amyloid protein 40 and CLU/APOJ. Interacts with MDK. Post-translationally, a fraction undergoes proteolytic cleavage of the extracellular domain at the cell membrane to generate a cytoplasmic tail fragment. This is internalized into the early endosome from where it trafficks in an LDLRAP1/ARH-dependent manner to the endocytic recycling compartment (ERC). In the ERC, it is further cleaved by gamma-secretase to release a fragment which translocates to the nucleus and mediates transcriptional repression. In terms of processing, N-glycosylation is required for ligand binding. Contains core-fucosylated N-glycans in kidney proximal convoluted tubules (PCTs) and hybrid-type N-glycans in proximal straight tubules (PSTs). Interacts with ligands in a glycoform-dependent manner. Retinol-binding protein and the vitamin D carrier GC/DBP are endocytosed primarily by PCTs, albumin is endocytosed equally by PCTs and PSTs, and the aminoglycoside kanamycin is endocytosed primarily by PSTs. In the inner ear, strongly expressed in the marginal cells of the stria vascularis (at protein level). In the female reproductive tract, expressed on the luminal side of the uterine epithelium (at protein level). In the adult brain, expressed in ependymal cells of the lateral ventricles where expression is restricted to the ependyma that faces the stem cell niche (at protein level). Expressed in neurons throughout the brain including in the hippocampus, limbic cortices and cerebellum (at protein level). In the developing optic nerve, expressed exclusively in astrocytes at 14.5 dpc, 16.5 dpc and 18.5 dpc (at protein level).

Its subcellular location is the apical cell membrane. It is found in the endosome lumen. The protein resides in the membrane. It localises to the coated pit. The protein localises to the cell projection. Its subcellular location is the dendrite. It is found in the axon. Its function is as follows. Multiligand endocytic receptor. Acts together with CUBN to mediate endocytosis of high-density lipoproteins. Mediates receptor-mediated uptake of polybasic drugs such as aprotinin, aminoglycosides and polymyxin B. In the kidney, mediates the tubular uptake and clearance of leptin. Also mediates transport of leptin across the blood-brain barrier through endocytosis at the choroid plexus epithelium. Endocytosis of leptin in neuronal cells is required for hypothalamic leptin signaling and leptin-mediated regulation of feeding and body weight. Mediates endocytosis and subsequent lysosomal degradation of CST3 in kidney proximal tubule cells. Mediates renal uptake of 25-hydroxyvitamin D3 in complex with the vitamin D3 transporter GC/DBP. Mediates renal uptake of metallothionein-bound heavy metals. Together with CUBN, mediates renal reabsorption of myoglobin. Mediates renal uptake and subsequent lysosomal degradation of APOM. Plays a role in kidney selenium homeostasis by mediating renal endocytosis of selenoprotein SEPP1. Mediates renal uptake of the antiapoptotic protein BIRC5/survivin which may be important for functional integrity of the kidney. Mediates renal uptake of matrix metalloproteinase MMP2 in complex with metalloproteinase inhibitor TIMP1. Mediates endocytosis of Sonic hedgehog protein N-product (ShhN), the active product of SHH. Also mediates ShhN transcytosis. In the embryonic neuroepithelium, mediates endocytic uptake and degradation of BMP4, is required for correct SHH localization in the ventral neural tube and plays a role in patterning of the ventral telencephalon. Required at the onset of neurulation to sequester SHH on the apical surface of neuroepithelial cells of the rostral diencephalon ventral midline and to control PTCH1-dependent uptake and intracellular trafficking of SHH. During neurulation, required in neuroepithelial cells for uptake of folate bound to the folate receptor FOLR1 which is necessary for neural tube closure. In the adult brain, negatively regulates BMP signaling in the subependymal zone which enables neurogenesis to proceed. In astrocytes, mediates endocytosis of ALB which is required for the synthesis of the neurotrophic factor oleic acid. Involved in neurite branching. During optic nerve development, required for SHH-mediated migration and proliferation of oligodendrocyte precursor cells. Mediates endocytic uptake and clearance of SHH in the retinal margin which protects retinal progenitor cells from mitogenic stimuli and keeps them quiescent. Plays a role in reproductive organ development by mediating uptake in reproductive tissues of androgen and estrogen bound to the sex hormone binding protein SHBG. Mediates endocytosis of angiotensin-2. Also mediates endocytosis of angiotensin 1-7. Binds to the complex composed of beta-amyloid protein 40 and CLU/APOJ and mediates its endocytosis and lysosomal degradation. Required for embryonic heart development. Required for normal hearing, possibly through interaction with estrogen in the inner ear. In Mus musculus (Mouse), this protein is Low-density lipoprotein receptor-related protein 2 (Lrp2).